Reading from the N-terminus, the 131-residue chain is Global transcriptional regulator Spx (131 aa).

Cysteines 10 and 13 form a disulfide.

This sequence belongs to the ArsC family. Spx subfamily. In terms of assembly, interacts with the C-terminal domain of the alpha subunit of the RNAP.

It is found in the cytoplasm. Global transcriptional regulator that plays a key role in stress response and exerts either positive or negative regulation of genes. Acts by interacting with the C-terminal domain of the alpha subunit of the RNA polymerase (RNAP). This interaction can enhance binding of RNAP to the promoter region of target genes and stimulate their transcription, or block interaction of RNAP with activator. The chain is Global transcriptional regulator Spx from Staphylococcus epidermidis (strain ATCC 35984 / DSM 28319 / BCRC 17069 / CCUG 31568 / BM 3577 / RP62A).